A 171-amino-acid polypeptide reads, in one-letter code: Adenine phosphoribosyltransferase (171 aa).

This sequence belongs to the purine/pyrimidine phosphoribosyltransferase family. In terms of assembly, homodimer.

The protein localises to the cytoplasm. It carries out the reaction AMP + diphosphate = 5-phospho-alpha-D-ribose 1-diphosphate + adenine. The protein operates within purine metabolism; AMP biosynthesis via salvage pathway; AMP from adenine: step 1/1. Its function is as follows. Catalyzes a salvage reaction resulting in the formation of AMP, that is energically less costly than de novo synthesis. This is Adenine phosphoribosyltransferase from Prochlorococcus marinus (strain MIT 9515).